Consider the following 461-residue polypeptide: Protein-serine O-palmitoleoyltransferase porcupine (461 aa).

Over 1–17 (MATFSRQEFFQQLLQGC) the chain is Cytoplasmic. A helical transmembrane segment spans residues 18–38 (LLPTAQQGLDQIWLLLAICLA). At 39 to 66 (CRLLWRLGLPSYLKHASTVAGGFFSLYH) the chain is on the extracellular side. The chain crosses the membrane as a helical span at residues 67–87 (FFQLHMVWVVLLSLLCYLVLF). Over 88–95 (LCRHSSHR) the chain is Cytoplasmic. The chain crosses the membrane as a helical span at residues 96–116 (GVFLSVTILIYLLMGEMHMVD). The Extracellular portion of the chain corresponds to 117 to 152 (TVTWHKMRGAQMIVAMKAVSLGFDLDRGEVGTVPSP). Residues 153–173 (VEFMGYLYFVGTIVFGPWISF) form a helical membrane-spanning segment. Topologically, residues 174–198 (HSYLQAVQGRPLSCRWLQKVARSLA) are cytoplasmic. Residue Cys-187 is the site of S-palmitoyl cysteine attachment. Residues 199-219 (LALLCLVLSTCVGPYLFPYFI) traverse the membrane as a helical segment. The Extracellular segment spans residues 220–252 (PLNGDRLLRNKKRKARGTMVRWLRAYESAVSFH). Residues 253–273 (FSNYFVGFLSEATATLAGAGF) traverse the membrane as a helical segment. Residues 274–337 (TEEKDHLEWD…SAVLVTYAAS (64 aa)) are Cytoplasmic-facing. The helical transmembrane segment at 338-358 (ALLHGFSFHLAAVLLSLAFIT) threads the bilayer. The active site involves His-341. At 359–396 (YVEHVLRKRLARILSACVLSKRCPPDCSHQHRLGLGVR) the chain is on the extracellular side. The chain crosses the membrane as a helical span at residues 397–417 (ALNLLFGALAIFHLAYLGSLF). Over 418 to 461 (DVDVDDTTEEQGYGMAYTVHKWSELSWASHWVTFGCWIFYRLIG) the chain is Cytoplasmic.

Belongs to the membrane-bound acyltransferase family. Porcupine subfamily. Interacts with WNT1, WNT3, WNT3A, WNT4, WNT5A, WNT5B, WNT6, WNT7A and WNT7B. As to expression, isoform 1 is expressed in fetal brain, brain, amygdala, caudate nucleus, cerebellum, hippocampus, pituitary, thalamus, heart, skeletal muscle and testis. Isoform 4 is expressed in amygdala, corpus callosum, hippocampus, spinal cord, kidney, liver, lung, spleen, uterus, testis. Isoform 2 and isoform 3 are expressed in substantia negra, spinal cord, heart and lung.

It localises to the endoplasmic reticulum membrane. The enzyme catalyses [Wnt protein]-L-serine + (9Z)-hexadecenoyl-CoA = [Wnt protein]-O-(9Z)-hexadecenoyl-L-serine + CoA. Protein-serine O-palmitoleoyltransferase that acts as a key regulator of the Wnt signaling pathway by mediating the attachment of palmitoleate, a 16-carbon monounsaturated fatty acid (C16:1(9Z)), to Wnt proteins. Serine palmitoleoylation of WNT proteins is required for efficient binding to frizzled receptors. In Homo sapiens (Human), this protein is Protein-serine O-palmitoleoyltransferase porcupine.